The following is a 92-amino-acid chain: Small ribosomal subunit protein bS21A (92 aa).

Positions 25–52 (GVFREMKQRRSYEKPSERKTREKSEAIR) are enriched in basic and acidic residues. The tract at residues 25-92 (GVFREMKQRR…LPQTAARPAG (68 aa)) is disordered.

It belongs to the bacterial ribosomal protein bS21 family.

In Bradyrhizobium diazoefficiens (strain JCM 10833 / BCRC 13528 / IAM 13628 / NBRC 14792 / USDA 110), this protein is Small ribosomal subunit protein bS21A.